A 97-amino-acid polypeptide reads, in one-letter code: Integration host factor subunit alpha (97 aa).

Positions 49–71 are disordered; the sequence is FGNFDLRDKNQRPGRNPKTGEDI.

It belongs to the bacterial histone-like protein family. In terms of assembly, heterodimer of an alpha and a beta chain.

Functionally, this protein is one of the two subunits of integration host factor, a specific DNA-binding protein that functions in genetic recombination as well as in transcriptional and translational control. The polypeptide is Integration host factor subunit alpha (Shewanella woodyi (strain ATCC 51908 / MS32)).